The following is a 98-amino-acid chain: C-X-C motif chemokine 10 (98 aa).

The first 21 residues, 1-21, serve as a signal peptide directing secretion; the sequence is MNQTAILICCLVFLTLSGIQG. Arg26 carries the citrulline modification. Intrachain disulfides connect Cys30/Cys57 and Cys32/Cys74.

This sequence belongs to the intercrine alpha (chemokine CxC) family.

It is found in the secreted. In terms of biological role, chemotactic for monocytes and T-lymphocytes. Binds to CXCR3. The polypeptide is C-X-C motif chemokine 10 (CXCL10) (Macaca nemestrina (Pig-tailed macaque)).